The following is a 168-amino-acid chain: 2-C-methyl-D-erythritol 2,4-cyclodiphosphate synthase (168 aa).

The a divalent metal cation site is built by Asp-11 and His-13. 4-CDP-2-C-methyl-D-erythritol 2-phosphate is bound by residues 11 to 13 (DVH) and 41 to 42 (HS). An a divalent metal cation-binding site is contributed by His-49. Residues 63–65 (DIG), 68–72 (FPDTD), 139–142 (TTTE), Phe-146, and Arg-149 each bind 4-CDP-2-C-methyl-D-erythritol 2-phosphate.

It belongs to the IspF family. Homotrimer. A divalent metal cation is required as a cofactor.

The enzyme catalyses 4-CDP-2-C-methyl-D-erythritol 2-phosphate = 2-C-methyl-D-erythritol 2,4-cyclic diphosphate + CMP. Its pathway is isoprenoid biosynthesis; isopentenyl diphosphate biosynthesis via DXP pathway; isopentenyl diphosphate from 1-deoxy-D-xylulose 5-phosphate: step 4/6. Its function is as follows. Involved in the biosynthesis of isopentenyl diphosphate (IPP) and dimethylallyl diphosphate (DMAPP), two major building blocks of isoprenoid compounds. Catalyzes the conversion of 4-diphosphocytidyl-2-C-methyl-D-erythritol 2-phosphate (CDP-ME2P) to 2-C-methyl-D-erythritol 2,4-cyclodiphosphate (ME-CPP) with a corresponding release of cytidine 5-monophosphate (CMP). In Psychrobacter arcticus (strain DSM 17307 / VKM B-2377 / 273-4), this protein is 2-C-methyl-D-erythritol 2,4-cyclodiphosphate synthase.